Reading from the N-terminus, the 258-residue chain is Acetylglutamate kinase (258 aa).

Substrate contacts are provided by residues 44–45, Arg-66, and Asn-158; that span reads GG. ATP is bound by residues 181–186 and 209–211; these read DVSGIL and IIT.

The protein belongs to the acetylglutamate kinase family. ArgB subfamily. Homodimer.

It localises to the cytoplasm. It carries out the reaction N-acetyl-L-glutamate + ATP = N-acetyl-L-glutamyl 5-phosphate + ADP. It functions in the pathway amino-acid biosynthesis; L-arginine biosynthesis; N(2)-acetyl-L-ornithine from L-glutamate: step 2/4. Functionally, catalyzes the ATP-dependent phosphorylation of N-acetyl-L-glutamate. This Salmonella paratyphi A (strain ATCC 9150 / SARB42) protein is Acetylglutamate kinase.